The sequence spans 335 residues: Anthranilate phosphoribosyltransferase (335 aa).

5-phospho-alpha-D-ribose 1-diphosphate contacts are provided by residues G82, 85-86 (GD), T90, 92-95 (NIST), 110-118 (KHGGRSVSS), and S122. Residue G82 participates in anthranilate binding. Residue S94 coordinates Mg(2+). Anthranilate is bound at residue R168. The Mg(2+) site is built by D226 and E227.

This sequence belongs to the anthranilate phosphoribosyltransferase family. As to quaternary structure, homodimer. Mg(2+) serves as cofactor.

The catalysed reaction is N-(5-phospho-beta-D-ribosyl)anthranilate + diphosphate = 5-phospho-alpha-D-ribose 1-diphosphate + anthranilate. Its pathway is amino-acid biosynthesis; L-tryptophan biosynthesis; L-tryptophan from chorismate: step 2/5. Its function is as follows. Catalyzes the transfer of the phosphoribosyl group of 5-phosphorylribose-1-pyrophosphate (PRPP) to anthranilate to yield N-(5'-phosphoribosyl)-anthranilate (PRA). The polypeptide is Anthranilate phosphoribosyltransferase (Francisella philomiragia subsp. philomiragia (strain ATCC 25017 / CCUG 19701 / FSC 153 / O#319-036)).